A 356-amino-acid chain; its full sequence is Cyanuric acid amidohydrolase (356 aa).

An RU A region spans residues 1–99 (MPIAKVHRIA…FLVFERAEGN (99 aa)). Substrate-binding positions include Arg-52 and 79 to 80 (SG). Residues 106–243 (ALAIGRAHTP…HEIVVLGMSE (138 aa)) form an RU B region. Lys-156 is a catalytic residue. Residues Arg-188 and 226-227 (SS) contribute to the substrate site. The active-site Nucleophile is Ser-226. Positions 249–356 (LAIAHGVMAD…VAVIAARTMG (108 aa)) are RU C. Glu-287 contacts Mg(2+). Substrate is bound by residues Arg-314 and 333–334 (SG). The Mg(2+) site is built by Gly-336, Gln-339, Gly-340, Pro-341, and Gly-344.

Belongs to the cyclic amide hydrolase (CyAH) family. Homotetramer.

It catalyses the reaction cyanurate + H2O = 1-carboxybiuret + H(+). Its pathway is xenobiotic degradation; atrazine degradation; biuret from cyanurate: step 1/1. Its activity is regulated as follows. Inhibited by barbituric acid. Functionally, responsible for the hydrolysis of cyanuric acid, an intermediate formed during catabolism of s-triazine based compounds in herbicides such as atrazine and polymers such as melamine. Catalyzes the hydrolytic opening of the s-triazine ring of cyanuric acid (2,4,6-trihydroxy-s-triazine) to yield carbon dioxide and carboxybiuret, which spontaneously decarboxylates to biuret. In Azorhizobium caulinodans (strain ATCC 43989 / DSM 5975 / JCM 20966 / LMG 6465 / NBRC 14845 / NCIMB 13405 / ORS 571), this protein is Cyanuric acid amidohydrolase.